The following is an 87-amino-acid chain: Keratin-associated protein 19-1 (87 aa).

A 21 X 2 AA repeats of G-[YCGS] region spans residues glycine 6–cysteine 72.

This sequence belongs to the KRTAP type 19 family. As to quaternary structure, interacts with hair keratins. In terms of tissue distribution, strong expression in narrowly defined pattern restricted to the lower and middle cortical regions of the hair shaft in both developing and cycling hair. During hair follicle regression (catagen), expression levels decrease until expression is no longer detectable in follicles at resting stage (telogen).

Its function is as follows. In the hair cortex, hair keratin intermediate filaments are embedded in an interfilamentous matrix, consisting of hair keratin-associated proteins (KRTAP), which are essential for the formation of a rigid and resistant hair shaft through their extensive disulfide bond cross-linking with abundant cysteine residues of hair keratins. The matrix proteins include the high-sulfur and high-glycine-tyrosine keratins. In Mus musculus (Mouse), this protein is Keratin-associated protein 19-1 (Krtap19-1).